Here is a 363-residue protein sequence, read N- to C-terminus: DNA replication and repair protein RecF (363 aa).

An ATP-binding site is contributed by 30-37 (GPNGSGKT).

Belongs to the RecF family.

It is found in the cytoplasm. Functionally, the RecF protein is involved in DNA metabolism; it is required for DNA replication and normal SOS inducibility. RecF binds preferentially to single-stranded, linear DNA. It also seems to bind ATP. This is DNA replication and repair protein RecF from Vibrio cholerae serotype O1 (strain ATCC 39541 / Classical Ogawa 395 / O395).